The chain runs to 272 residues: Tryptophan synthase alpha chain (272 aa).

Residues Glu-49 and Glu-60 each act as proton acceptor in the active site.

The protein belongs to the TrpA family. As to quaternary structure, tetramer of two alpha and two beta chains.

The catalysed reaction is (1S,2R)-1-C-(indol-3-yl)glycerol 3-phosphate + L-serine = D-glyceraldehyde 3-phosphate + L-tryptophan + H2O. It participates in amino-acid biosynthesis; L-tryptophan biosynthesis; L-tryptophan from chorismate: step 5/5. Its function is as follows. The alpha subunit is responsible for the aldol cleavage of indoleglycerol phosphate to indole and glyceraldehyde 3-phosphate. The protein is Tryptophan synthase alpha chain of Legionella pneumophila subsp. pneumophila (strain Philadelphia 1 / ATCC 33152 / DSM 7513).